The chain runs to 122 residues: Small ribosomal subunit protein uS13 (122 aa).

The disordered stretch occupies residues 97–122 (PVRGQRTHTNARTRKGPAKAIAGKKK).

The protein belongs to the universal ribosomal protein uS13 family. Part of the 30S ribosomal subunit. Forms a loose heterodimer with protein S19. Forms two bridges to the 50S subunit in the 70S ribosome.

Its function is as follows. Located at the top of the head of the 30S subunit, it contacts several helices of the 16S rRNA. In the 70S ribosome it contacts the 23S rRNA (bridge B1a) and protein L5 of the 50S subunit (bridge B1b), connecting the 2 subunits; these bridges are implicated in subunit movement. Contacts the tRNAs in the A and P-sites. The protein is Small ribosomal subunit protein uS13 of Rhizobium rhizogenes (strain K84 / ATCC BAA-868) (Agrobacterium radiobacter).